Consider the following 156-residue polypeptide: Ribosomal RNA large subunit methyltransferase H (156 aa).

S-adenosyl-L-methionine is bound by residues Leu-73, Gly-104, and 123–128 (LSALTL).

It belongs to the RNA methyltransferase RlmH family. In terms of assembly, homodimer.

It is found in the cytoplasm. The enzyme catalyses pseudouridine(1915) in 23S rRNA + S-adenosyl-L-methionine = N(3)-methylpseudouridine(1915) in 23S rRNA + S-adenosyl-L-homocysteine + H(+). Specifically methylates the pseudouridine at position 1915 (m3Psi1915) in 23S rRNA. This Psychromonas ingrahamii (strain DSM 17664 / CCUG 51855 / 37) protein is Ribosomal RNA large subunit methyltransferase H.